Reading from the N-terminus, the 635-residue chain is Threonine--tRNA ligase (635 aa).

Residues 1 to 58 (MIRVICDNETFELPTGSTAADFASKIKNSHYFAGVVINDQIKDLSTTLSEGDVLKFVT) enclose the TGS domain. The segment at 237–528 (DHRVLGTKLD…LIEHFKGRFP (292 aa)) is catalytic. Zn(2+) contacts are provided by C328, H379, and H505.

It belongs to the class-II aminoacyl-tRNA synthetase family. In terms of assembly, homodimer. Zn(2+) is required as a cofactor.

The protein localises to the cytoplasm. It catalyses the reaction tRNA(Thr) + L-threonine + ATP = L-threonyl-tRNA(Thr) + AMP + diphosphate + H(+). Its function is as follows. Catalyzes the attachment of threonine to tRNA(Thr) in a two-step reaction: L-threonine is first activated by ATP to form Thr-AMP and then transferred to the acceptor end of tRNA(Thr). Also edits incorrectly charged L-seryl-tRNA(Thr). This Chlamydia felis (strain Fe/C-56) (Chlamydophila felis) protein is Threonine--tRNA ligase.